Here is a 246-residue protein sequence, read N- to C-terminus: tRNA (guanine-N(1)-)-methyltransferase (246 aa).

Residues G117 and 137-142 (IGDYVL) contribute to the S-adenosyl-L-methionine site.

The protein belongs to the RNA methyltransferase TrmD family. In terms of assembly, homodimer.

Its subcellular location is the cytoplasm. It carries out the reaction guanosine(37) in tRNA + S-adenosyl-L-methionine = N(1)-methylguanosine(37) in tRNA + S-adenosyl-L-homocysteine + H(+). Functionally, specifically methylates guanosine-37 in various tRNAs. This chain is tRNA (guanine-N(1)-)-methyltransferase, found in Acinetobacter baumannii (strain SDF).